The primary structure comprises 405 residues: Cysteine desulfurase IscS (405 aa).

Residues 75-76 (AT), N155, Q183, and 203-205 (SGH) each bind pyridoxal 5'-phosphate. K206 bears the N6-(pyridoxal phosphate)lysine mark. A pyridoxal 5'-phosphate-binding site is contributed by T243. C329 acts as the Cysteine persulfide intermediate in catalysis. Residue C329 participates in [2Fe-2S] cluster binding.

It belongs to the class-V pyridoxal-phosphate-dependent aminotransferase family. NifS/IscS subfamily. Homodimer. Forms a heterotetramer with IscU, interacts with other sulfur acceptors. Requires pyridoxal 5'-phosphate as cofactor.

It localises to the cytoplasm. It carries out the reaction (sulfur carrier)-H + L-cysteine = (sulfur carrier)-SH + L-alanine. It functions in the pathway cofactor biosynthesis; iron-sulfur cluster biosynthesis. Functionally, master enzyme that delivers sulfur to a number of partners involved in Fe-S cluster assembly, tRNA modification or cofactor biosynthesis. Catalyzes the removal of elemental sulfur atoms from cysteine to produce alanine. Functions as a sulfur delivery protein for Fe-S cluster synthesis onto IscU, an Fe-S scaffold assembly protein, as well as other S acceptor proteins. The polypeptide is Cysteine desulfurase IscS (Pseudoalteromonas translucida (strain TAC 125)).